A 107-amino-acid polypeptide reads, in one-letter code: Phosphoribosyl-ATP pyrophosphatase (107 aa).

Belongs to the PRA-PH family.

Its subcellular location is the cytoplasm. The catalysed reaction is 1-(5-phospho-beta-D-ribosyl)-ATP + H2O = 1-(5-phospho-beta-D-ribosyl)-5'-AMP + diphosphate + H(+). It functions in the pathway amino-acid biosynthesis; L-histidine biosynthesis; L-histidine from 5-phospho-alpha-D-ribose 1-diphosphate: step 2/9. This chain is Phosphoribosyl-ATP pyrophosphatase, found in Bacillus mycoides (strain KBAB4) (Bacillus weihenstephanensis).